We begin with the raw amino-acid sequence, 91 residues long: Putative regulatory protein PTH_1796 (91 aa).

This sequence belongs to the RemA family.

The polypeptide is Putative regulatory protein PTH_1796 (Pelotomaculum thermopropionicum (strain DSM 13744 / JCM 10971 / SI)).